Here is a 403-residue protein sequence, read N- to C-terminus: Chaperone protein DnaJ (403 aa).

Residues 4–69 (DYYEILGVAR…DKRRRYDQFG (66 aa)) form the J domain. The segment at 159–240 (GVEKTIKIKK…CYGEGIKQGE (82 aa)) adopts a CR-type zinc-finger fold. Zn(2+)-binding residues include Cys-172, Cys-175, Cys-188, Cys-191, Cys-214, Cys-217, Cys-228, and Cys-231. CXXCXGXG motif repeat units follow at residues 172–179 (CRECNGTG), 188–195 (CPTCHGSG), 214–221 (CPTCGGEG), and 228–235 (CPSCYGEG).

It belongs to the DnaJ family. Homodimer. Requires Zn(2+) as cofactor.

The protein resides in the cytoplasm. In terms of biological role, participates actively in the response to hyperosmotic and heat shock by preventing the aggregation of stress-denatured proteins and by disaggregating proteins, also in an autonomous, DnaK-independent fashion. Unfolded proteins bind initially to DnaJ; upon interaction with the DnaJ-bound protein, DnaK hydrolyzes its bound ATP, resulting in the formation of a stable complex. GrpE releases ADP from DnaK; ATP binding to DnaK triggers the release of the substrate protein, thus completing the reaction cycle. Several rounds of ATP-dependent interactions between DnaJ, DnaK and GrpE are required for fully efficient folding. Also involved, together with DnaK and GrpE, in the DNA replication of plasmids through activation of initiation proteins. In Chlorobaculum tepidum (strain ATCC 49652 / DSM 12025 / NBRC 103806 / TLS) (Chlorobium tepidum), this protein is Chaperone protein DnaJ.